The sequence spans 477 residues: Bifunctional protein HldE (477 aa).

The tract at residues 1-318 is ribokinase; sequence MKVTLPEFER…ENAVRGRADT (318 aa). Lys179 carries the post-translational modification N6-acetyllysine. 195 to 198 lines the ATP pocket; the sequence is NLSE. Asp264 is a catalytic residue. The tract at residues 344 to 477 is cytidylyltransferase; it reads MTNGVFDILH…IKKIQQDKKG (134 aa).

It in the N-terminal section; belongs to the carbohydrate kinase PfkB family. This sequence in the C-terminal section; belongs to the cytidylyltransferase family. As to quaternary structure, homodimer.

The catalysed reaction is D-glycero-beta-D-manno-heptose 7-phosphate + ATP = D-glycero-beta-D-manno-heptose 1,7-bisphosphate + ADP + H(+). It carries out the reaction D-glycero-beta-D-manno-heptose 1-phosphate + ATP + H(+) = ADP-D-glycero-beta-D-manno-heptose + diphosphate. Its pathway is nucleotide-sugar biosynthesis; ADP-L-glycero-beta-D-manno-heptose biosynthesis; ADP-L-glycero-beta-D-manno-heptose from D-glycero-beta-D-manno-heptose 7-phosphate: step 1/4. It functions in the pathway nucleotide-sugar biosynthesis; ADP-L-glycero-beta-D-manno-heptose biosynthesis; ADP-L-glycero-beta-D-manno-heptose from D-glycero-beta-D-manno-heptose 7-phosphate: step 3/4. Functionally, catalyzes the phosphorylation of D-glycero-D-manno-heptose 7-phosphate at the C-1 position to selectively form D-glycero-beta-D-manno-heptose-1,7-bisphosphate. In terms of biological role, catalyzes the ADP transfer from ATP to D-glycero-beta-D-manno-heptose 1-phosphate, yielding ADP-D-glycero-beta-D-manno-heptose. This Escherichia coli O9:H4 (strain HS) protein is Bifunctional protein HldE.